Reading from the N-terminus, the 160-residue chain is CST complex subunit STN1 (160 aa).

A DNA-binding region (OB) is located at residues V41–E133.

It belongs to the STN1 family. In terms of assembly, component of the CST complex, composed of CTC1, TEN1 and STN1. Interacts with CTC1. Interacts with TEN1. Interacts with POT1A. In vitro interaction with TEN1 and POT1A is mutually exclusive, indicating that POT1A and TEN1 may compete for the same binding site. Widely expressed.

Its subcellular location is the nucleus. It localises to the chromosome. It is found in the telomere. Component of the CST complex, a complex that binds to single-stranded DNA and is required to protect telomeres from DNA degradation. The CST complex binds single-stranded DNA with high affinity in a sequence-independent manner, while isolated subunits bind DNA with low affinity by themselves. Associates with enzymatically active telomerase. Plays a genomewide role in DNA replication and facilitates re-replication at non-telomeric loci. This is CST complex subunit STN1 from Arabidopsis thaliana (Mouse-ear cress).